The primary structure comprises 75 residues: Probable pilin MJ0431 (75 aa).

Positions 1–15 (MGKMKILKKLLSKKG) are excised as a propeptide. A QXSXEXXXL motif is present at residues 16 to 24 (QLSMEVGVL).

The N-terminus is cleaved by the prepilin peptidase EppA, which recognizes the class III signal sequence.

It localises to the secreted. Its subcellular location is the cell surface. It is found in the fimbrium. The polypeptide is Probable pilin MJ0431 (Methanocaldococcus jannaschii (strain ATCC 43067 / DSM 2661 / JAL-1 / JCM 10045 / NBRC 100440) (Methanococcus jannaschii)).